Consider the following 206-residue polypeptide: RNA pyrophosphohydrolase (206 aa).

The Nudix hydrolase domain maps to 6 to 150; the sequence is GYRPNVGIVI…KRDVYRKVMK (145 aa). The Nudix box motif lies at 38–59; sequence GGINEGENIETAMYRELYEEVG. The segment covering 162–191 has biased composition (basic and acidic residues); it reads KPETVEKPRVERTEKRDFQKRDNQKREFRK. The disordered stretch occupies residues 162–206; the sequence is KPETVEKPRVERTEKRDFQKRDNQKREFRKSARTWNNSHQKGKAQ.

This sequence belongs to the Nudix hydrolase family. RppH subfamily. A divalent metal cation is required as a cofactor.

Accelerates the degradation of transcripts by removing pyrophosphate from the 5'-end of triphosphorylated RNA, leading to a more labile monophosphorylated state that can stimulate subsequent ribonuclease cleavage. The protein is RNA pyrophosphohydrolase of Actinobacillus pleuropneumoniae serotype 3 (strain JL03).